The chain runs to 544 residues: Putative cysteine ligase BshC (544 aa).

The stretch at 431–463 forms a coiled coil; sequence LNDTCRTIKEEHEKFIQELSRLDEKIYDFEEKN.

It belongs to the BshC family.

Involved in bacillithiol (BSH) biosynthesis. May catalyze the last step of the pathway, the addition of cysteine to glucosamine malate (GlcN-Mal) to generate BSH. The sequence is that of Putative cysteine ligase BshC from Natranaerobius thermophilus (strain ATCC BAA-1301 / DSM 18059 / JW/NM-WN-LF).